Consider the following 331-residue polypeptide: Probable transaldolase (331 aa).

The active-site Schiff-base intermediate with substrate is the Lys142.

It belongs to the transaldolase family. Type 1 subfamily. In terms of assembly, homodimer.

It localises to the cytoplasm. It carries out the reaction D-sedoheptulose 7-phosphate + D-glyceraldehyde 3-phosphate = D-erythrose 4-phosphate + beta-D-fructose 6-phosphate. The protein operates within carbohydrate degradation; pentose phosphate pathway; D-glyceraldehyde 3-phosphate and beta-D-fructose 6-phosphate from D-ribose 5-phosphate and D-xylulose 5-phosphate (non-oxidative stage): step 2/3. Transaldolase is important for the balance of metabolites in the pentose-phosphate pathway. In Drosophila melanogaster (Fruit fly), this protein is Probable transaldolase.